We begin with the raw amino-acid sequence, 831 residues long: Probable inactive serine/threonine-protein kinase DDB_G0274613 (831 aa).

The RING-type zinc finger occupies Cys9–Arg63. Residues Arg83–Phe348 adopt a coiled-coil conformation. Residues Gln414–Phe787 form the Protein kinase domain. The segment at Asn657–Asn703 is disordered.

This sequence belongs to the protein kinase superfamily. CMGC Ser/Thr protein kinase family.

This Dictyostelium discoideum (Social amoeba) protein is Probable inactive serine/threonine-protein kinase DDB_G0274613.